The chain runs to 81 residues: Protein RALF-like 6 (81 aa).

The signal sequence occupies residues 1–29 (MAAHKKSHIRIFFVSVMIILSLFSGFGEG). 2 cysteine pairs are disulfide-bonded: C46-C54 and C66-C72.

It belongs to the plant rapid alkalinization factor (RALF) family.

It localises to the secreted. Its function is as follows. Cell signaling peptide that may regulate plant stress, growth, and development. Mediates a rapid alkalinization of extracellular space by mediating a transient increase in the cytoplasmic Ca(2+) concentration leading to a calcium-dependent signaling events through a cell surface receptor and a concomitant activation of some intracellular mitogen-activated protein kinases. The protein is Protein RALF-like 6 (RALFL6) of Arabidopsis thaliana (Mouse-ear cress).